Reading from the N-terminus, the 142-residue chain is Peptide methionine sulfoxide reductase MsrB (142 aa).

Positions 3 to 126 constitute a MsrB domain; that stretch reads KEELKKKLSP…NSAALRFIPF (124 aa). Catalysis depends on Cys115, which acts as the Nucleophile.

The protein belongs to the MsrB Met sulfoxide reductase family.

It carries out the reaction L-methionyl-[protein] + [thioredoxin]-disulfide + H2O = L-methionyl-(R)-S-oxide-[protein] + [thioredoxin]-dithiol. In Lactococcus lactis subsp. cremoris (strain MG1363), this protein is Peptide methionine sulfoxide reductase MsrB.